A 786-amino-acid chain; its full sequence is Protein translocase subunit SecA 1 (786 aa).

Residues glutamine 85, 103-107 (GEGKT), and aspartate 491 contribute to the ATP site.

Belongs to the SecA family. As to quaternary structure, monomer and homodimer. Part of the essential Sec protein translocation apparatus which comprises SecA, SecYEG and auxiliary proteins SecDF. Other proteins may also be involved.

Its subcellular location is the cell membrane. It is found in the cytoplasm. It catalyses the reaction ATP + H2O + cellular proteinSide 1 = ADP + phosphate + cellular proteinSide 2.. Its function is as follows. Part of the Sec protein translocase complex. Interacts with the SecYEG preprotein conducting channel. Has a central role in coupling the hydrolysis of ATP to the transfer of proteins into and across the cell membrane, serving as an ATP-driven molecular motor driving the stepwise translocation of polypeptide chains across the membrane. The protein is Protein translocase subunit SecA 1 of Pediococcus pentosaceus (strain ATCC 25745 / CCUG 21536 / LMG 10740 / 183-1w).